Reading from the N-terminus, the 302-residue chain is HTH-type transcriptional regulator AbgR (302 aa).

An HTH lysR-type domain is found at V5–T62. The segment at residues I22 to Q41 is a DNA-binding region (H-T-H motif).

Belongs to the LysR transcriptional regulatory family.

Functionally, could be the regulator of the abg operon. This is HTH-type transcriptional regulator AbgR (abgR) from Escherichia coli (strain K12).